The primary structure comprises 250 residues: MGAAASIQTTVNTLSERISSKLEQEANASAQTKCDIEIGNFYIRQNHGCNLTVKNMCSADADAQLDAVLSAATETYSGLTPEQKAYVPAMFTAALNIQTSVNTVVRDFENYVKQTCNSSAVVDNKLKIQNVIIDECYGAPGSPTNLEFINTGSSKGNCAIKALMQLTTKATTQIAPKQVAGTGVQFYMIVIGVIILAALFMYYAKRMLFTSTNDKIKLILANKENVHWTTYMDTFFRTSPMVIATTDMQN.

Gly2 carries N-myristoyl glycine; by host lipidation. Positions 2-12 (GAAASIQTTVN) are targeting to MV membrane. At 2–183 (GAAASIQTTV…IAPKQVAGTG (182 aa)) the chain is on the virion surface side. 3 cysteine pairs are disulfide-bonded: Cys34-Cys57, Cys49-Cys136, and Cys116-Cys158. The chain crosses the membrane as a helical span at residues 184-204 (VQFYMIVIGVIILAALFMYYA). The Intravirion portion of the chain corresponds to 205–250 (KRMLFTSTNDKIKLILANKENVHWTTYMDTFFRTSPMVIATTDMQN).

The protein belongs to the orthopoxvirus OPG095 family. As to quaternary structure, component of the entry fusion complex (EFC) composed of OPG053/F9, OPG076/O3, OPG086/G3, OPG094/G9, OPG095/L1, OPG099/L5, OPG107/H2, OPG143/A16, OPG104/J5, OPG147/A21 and OPG155/A28. Except for OPG095/L1 and OPG053/F9, each of the EFC proteins is required for assembly or stability of the complex. Post-translationally, myristoylated. In terms of processing, disulfid bonds are oxidized in the cytoplasm by OPG088 protein. Unglycosylated because produced in viral factories instead of the classic ER -Golgi route.

The protein localises to the virion membrane. In terms of biological role, component of the entry fusion complex (EFC), which consists of 11 proteins. During cell infection, this complex mediates entry of the virion core into the host cytoplasm by a two-step mechanism consisting of lipid mixing of the viral and cellular membranes and subsequent pore formation. In Bos taurus (Bovine), this protein is Entry-fusion complex associated protein OPG095 (OPG099).